We begin with the raw amino-acid sequence, 190 residues long: Elongation factor P 1 (190 aa).

It belongs to the elongation factor P family.

The protein localises to the cytoplasm. Its pathway is protein biosynthesis; polypeptide chain elongation. Functionally, involved in peptide bond synthesis. Stimulates efficient translation and peptide-bond synthesis on native or reconstituted 70S ribosomes in vitro. Probably functions indirectly by altering the affinity of the ribosome for aminoacyl-tRNA, thus increasing their reactivity as acceptors for peptidyl transferase. This is Elongation factor P 1 (efp1) from Lactobacillus johnsonii (strain CNCM I-12250 / La1 / NCC 533).